We begin with the raw amino-acid sequence, 1259 residues long: Protein flightless-1 homolog (1259 aa).

LRR repeat units lie at residues 7–32, 33–55, 56–78, 80–103, 104–126, 128–149, 150–173, 176–201, 222–245, 247–268, 269–291, 293–316, 317–339, 340–363, and 365–385; these read LPFI…VKSM, TSLR…LASL, QKLE…LSSL, NLRA…IFQL, DDLS…LENS, NMLV…LFIN, LTDL…MRRL, LQTL…VSLQ, LSNL…LYSL, NLKR…IDQW, TKLE…ICKL, KLKK…VGKL, SNLV…LCRC, GKLK…HFLT, and LEVL…PVDR. 4 Gelsolin-like repeats span residues 509–589, 628–702, 757–830, and 1170–1225; these read IPIQ…SEEF, NIRL…PEFW, DVVP…CQVF, and EKCS…RSKD.

In terms of tissue distribution, expressed in ventricular cardiomyocytes, where it particularly localizes to intercalated disks and costamere-like structures (at protein level).

The protein resides in the nucleus. The protein localises to the cytoplasm. It localises to the cytoskeleton. Its subcellular location is the microtubule organizing center. It is found in the centrosome. The protein resides in the cell junction. The protein localises to the focal adhesion. Is a regulator of actin polymerization, required for proper myofibril organization and the assembly of cardiomyocyte cell adhesion complexes. Is a regulator of the length of sarcomeric thin filaments. Regulates cytoskeletal rearrangements involved in cytokinesis and cell migration, by inhibiting Rac1-dependent paxillin phosphorylation. May play a role as coactivator in transcriptional activation by hormone-activated nuclear receptors (NR) and acts in cooperation with NCOA2 and CARM1. Involved in estrogen hormone signaling. The polypeptide is Protein flightless-1 homolog (Danio rerio (Zebrafish)).